The sequence spans 238 residues: MSEQDFREIARNGLWRNNPGLVQLLGLCPLLGTSNSTVNALGLGLATMLVLACSNAAVSLVRGAVSEAIRLPAFVMIIAVLTTCIELLMQAWTYELYQVLGIFIPLITTNCVILGRAEAFAAKNGVLRASFDGLLMGLGFALVLLVLGGLRELLGQGTLLADMHLLFGPAAADWKIQPFPQYQGFLLAILPPGAFIMLGLLIALKNRIDESLAERAKVQAGDVPATQRQRVRVTGVIE.

5 helical membrane-spanning segments follow: residues 41-61, 71-91, 95-115, 130-150, and 184-204; these read LGLG…VSLV, LPAF…LMQA, ELYQ…VILG, SFDG…LGGL, and GFLL…LIAL.

The protein belongs to the NqrDE/RnfAE family. In terms of assembly, the complex is composed of six subunits: RnfA, RnfB, RnfC, RnfD, RnfE and RnfG.

It localises to the cell inner membrane. Part of a membrane-bound complex that couples electron transfer with translocation of ions across the membrane. The polypeptide is Ion-translocating oxidoreductase complex subunit E (Pseudomonas aeruginosa (strain LESB58)).